Reading from the N-terminus, the 372-residue chain is MTGDNTLIHSHGINRRDFMKLCAALAATMGLSSKAAAEMAESVTNPQRPPVIWIGAQECTGCTESLLRATHPTVENLVLETISLEYHEVLSAAFGHQVEENKHNALEKYKGQYVLVVDGSIPLKDNGIYCMVAGEPIVDHIRKAAEGAAAIIAIGSCSAWGGVAAAGVNPTGAVSLQEVLPGKTVINIPGCPPNPHNFLATVAHIITYGKPPKLDDKNRPTFAYGRLIHEHCERRPHFDAGRFAKEFGDEGHREGWCLYHLGCKGPETYGNCSTLQFCDVGGVWPVAIGHPCYGCNEEGIGFHKGIHQLANVENQTPRSQKPDVNAKEGGNVSAGAIGLLGGVVGLVAGVSVMAVRELGRQQKKDNADSRGE.

The segment at residues 1-37 (MTGDNTLIHSHGINRRDFMKLCAALAATMGLSSKAAA) is a signal peptide (tat-type signal). [4Fe-4S] cluster is bound by residues cysteine 59, cysteine 62, cysteine 157, cysteine 191, histidine 229, cysteine 232, cysteine 257, and cysteine 263. Residues cysteine 272, cysteine 292, and cysteine 295 each coordinate [3Fe-4S] cluster.

Belongs to the [NiFe]/[NiFeSe] hydrogenase small subunit family. Heterodimer of a large and a small subunit. [4Fe-4S] cluster serves as cofactor. The cofactor is [3Fe-4S] cluster. Post-translationally, predicted to be exported by the Tat system. The position of the signal peptide cleavage has not been experimentally proven.

The protein localises to the cell membrane. The protein resides in the periplasm. It carries out the reaction H2 + A = AH2. Functionally, this is one of three E.coli hydrogenases synthesized in response to different physiological conditions. HYD2 is involved in hydrogen uptake. This chain is Hydrogenase-2 small chain (hybO), found in Escherichia coli O157:H7.